Consider the following 432-residue polypeptide: Trigger factor (432 aa).

Positions 161–246 (DDRVTIDFVG…LKKVENMVLP (86 aa)) constitute a PPIase FKBP-type domain.

It belongs to the FKBP-type PPIase family. Tig subfamily.

The protein resides in the cytoplasm. It catalyses the reaction [protein]-peptidylproline (omega=180) = [protein]-peptidylproline (omega=0). In terms of biological role, involved in protein export. Acts as a chaperone by maintaining the newly synthesized protein in an open conformation. Functions as a peptidyl-prolyl cis-trans isomerase. This chain is Trigger factor, found in Haemophilus influenzae (strain PittGG).